Here is a 621-residue protein sequence, read N- to C-terminus: Replication factor A protein 1 (621 aa).

N-acetylserine is present on S2. Residue S178 is modified to Phosphoserine; by ATM or ATR. The OB DNA-binding region spans 197 to 284; sequence WTIKARVSYK…PYELNLDRDT (88 aa). The C4-type zinc-finger motif lies at 486-508; it reads CSNENCNKKVLEQPDGTWRCEKC.

It belongs to the replication factor A protein 1 family. As to quaternary structure, component of the heterotrimeric canonical replication protein A complex (RPA). Interacts with POB3. Post-translationally, the N-terminus is blocked.

It is found in the nucleus. In terms of biological role, as part of the replication protein A (RPA/RP-A), a single-stranded DNA-binding heterotrimeric complex, may play an essential role in DNA replication, recombination and repair. Binds and stabilizes single-stranded DNA intermediates, preventing complementary DNA reannealing and recruiting different proteins involved in DNA metabolism. Binds to single-stranded sequences participating in DNA replication in addition to those mediating transcriptional repression (URS1) and activation (CAR1). Stimulates the activity of a cognate strand exchange protein (SEP1). It cooperates with T-AG and DNA topoisomerase I to unwind template DNA containing the simian virus 40 origin of DNA replication. This chain is Replication factor A protein 1 (RFA1), found in Saccharomyces cerevisiae (strain ATCC 204508 / S288c) (Baker's yeast).